A 116-amino-acid polypeptide reads, in one-letter code: Non-specific lipid-transfer protein (116 aa).

The signal sequence occupies residues 1–25 (MAKMAMMVLCAGVTCMVVGAPYTEA). 4 disulfide bridges follow: cysteine 28-cysteine 75, cysteine 38-cysteine 52, cysteine 53-cysteine 98, and cysteine 73-cysteine 112.

The protein belongs to the plant LTP family.

In terms of biological role, plant non-specific lipid-transfer proteins transfer phospholipids as well as galactolipids across membranes. May play a role in wax or cutin deposition in the cell walls of expanding epidermal cells and certain secretory tissues. In Helianthus annuus (Common sunflower), this protein is Non-specific lipid-transfer protein.